A 102-amino-acid chain; its full sequence is Putative UPF0320 protein YMR326C (102 aa).

The protein belongs to the UPF0320 family.

In Saccharomyces cerevisiae (strain ATCC 204508 / S288c) (Baker's yeast), this protein is Putative UPF0320 protein YMR326C.